The primary structure comprises 157 residues: Parasitophorous vacuole membrane protein S16 (157 aa).

The signal sequence occupies residues 1–25 (MNIRKFIPSLALMLIFFAFANLVLS). Residues 26–105 (DANDKAKKPA…DKKTTVNRNL (80 aa)) lie on the Extracellular side of the membrane. Residues 30–74 (KAKKPAGKGSPSTLQTPGSSSGASLHAVGPNQGGLSQGLSGKDSA) form a disordered region. The span at 39–52 (SPSTLQTPGSSSGA) shows a compositional bias: polar residues. A helical membrane pass occupies residues 106–126 (IISTAVTNMIMLIILSGIVGF). The Cytoplasmic segment spans residues 127–157 (KVKKTKNADDDKGDKDKDKDNTDEGDEGDDS). The segment at 130–157 (KTKNADDDKGDKDKDKDNTDEGDEGDDS) is disordered. A compositionally biased stretch (basic and acidic residues) spans 132 to 148 (KNADDDKGDKDKDKDNT).

It localises to the parasitophorous vacuole membrane. Its subcellular location is the vacuole. Its function is as follows. Involved in male gametogenesis. Required for exflagellation of male gametocytes. May play a role in parasite transmission in the mosquito. Binds to the mosquito vector midgut. This is Parasitophorous vacuole membrane protein S16 from Plasmodium falciparum (isolate 3D7).